Here is a 199-residue protein sequence, read N- to C-terminus: MGLEIKGVTIPALMIKLDKSRSFEENLEELEKKLSSAFFQGSVSVVDLSDMELSEDQKEKIESILKKYNSKVLGYRTSDKRSEKRSISNVSEKKSLKIINKTLRSGQRVEYDGDILIIGDVNPDAYVIASGNIIVMGTLRGIVHAGANGDETAVIMALKLKPQQLRIASYLTRSPDEMEEPEYPEKAYIEDNQIYIDKI.

This sequence belongs to the MinC family. As to quaternary structure, interacts with MinD and FtsZ.

Functionally, cell division inhibitor that blocks the formation of polar Z ring septums. Rapidly oscillates between the poles of the cell to destabilize FtsZ filaments that have formed before they mature into polar Z rings. Prevents FtsZ polymerization. The sequence is that of Probable septum site-determining protein MinC from Persephonella marina (strain DSM 14350 / EX-H1).